The sequence spans 495 residues: Trimethylamine methyltransferase MttB (495 aa).

A non-standard amino acid (pyrrolysine) is located at residue pyrrolysine 334.

The protein belongs to the trimethylamine methyltransferase family. In terms of assembly, can form a complex with MttC.

The catalysed reaction is Co(I)-[trimethylamine-specific corrinoid protein] + trimethylamine + H(+) = methyl-Co(III)-[trimethylamine-specific corrinoid protein] + dimethylamine. The protein operates within one-carbon metabolism; methanogenesis from trimethylamine. Catalyzes the transfer of a methyl group from trimethylamine to the corrinoid cofactor of MttC. The chain is Trimethylamine methyltransferase MttB from Methanosarcina barkeri.